The sequence spans 240 residues: Ribonuclease HII (240 aa).

The region spanning 31-222 (RLIAGVDEAG…VRRALGLETA (192 aa)) is the RNase H type-2 domain. The a divalent metal cation site is built by D37, E38, and D130.

The protein belongs to the RNase HII family. Mn(2+) serves as cofactor. Mg(2+) is required as a cofactor.

It localises to the cytoplasm. It carries out the reaction Endonucleolytic cleavage to 5'-phosphomonoester.. Its function is as follows. Endonuclease that specifically degrades the RNA of RNA-DNA hybrids. This Xanthomonas campestris pv. campestris (strain B100) protein is Ribonuclease HII.